Consider the following 827-residue polypeptide: Periplasmic nitrate reductase (827 aa).

Residues 1-33 constitute a signal peptide (tat-type signal); sequence MNLSRRDFMKANAAMAAATAAGLTIPVKNVVAA. A 4Fe-4S Mo/W bis-MGD-type domain is found at 37–93; the sequence is IKWDKGVCRFCGTGCAVLVGTKDGRVVASQGDPDAEVNRGLNCIKGYFLPKIMYGKD. [4Fe-4S] cluster contacts are provided by C44, C47, C51, and C79. Residues K81, Q148, N173, C177, 210–217, 241–245, 260–262, M370, Q374, N480, 506–507, K529, D556, and 716–725 contribute to the Mo-bis(molybdopterin guanine dinucleotide) site; these read WGSNMAEM, STYEH, QTD, SD, and TGRVLEHWHT. A substrate-binding site is contributed by F792. N800 and K817 together coordinate Mo-bis(molybdopterin guanine dinucleotide).

The protein belongs to the prokaryotic molybdopterin-containing oxidoreductase family. NasA/NapA/NarB subfamily. Component of the periplasmic nitrate reductase NapAB complex composed of NapA and NapB. [4Fe-4S] cluster is required as a cofactor. Mo-bis(molybdopterin guanine dinucleotide) serves as cofactor. Predicted to be exported by the Tat system. The position of the signal peptide cleavage has not been experimentally proven.

The protein localises to the periplasm. The catalysed reaction is 2 Fe(II)-[cytochrome] + nitrate + 2 H(+) = 2 Fe(III)-[cytochrome] + nitrite + H2O. In terms of biological role, catalytic subunit of the periplasmic nitrate reductase complex NapAB. Receives electrons from NapB and catalyzes the reduction of nitrate to nitrite. The protein is Periplasmic nitrate reductase of Haemophilus influenzae (strain PittEE).